Reading from the N-terminus, the 441-residue chain is Keratin, type I cytoskeletal 17 (441 aa).

The interval 1–23 (MTTTIRHFSSGSIKGSSGLAGGS) is disordered. Residues 1 to 91 (MTTTIRHFSS…GGVDGLLVGG (91 aa)) are head. Residues 9–23 (SSGSIKGSSGLAGGS) show a composition bias toward low complexity. Residue serine 12 is modified to Phosphoserine. Lysine 14 participates in a covalent cross-link: Glycyl lysine isopeptide (Lys-Gly) (interchain with G-Cter in SUMO1); alternate. Residue lysine 14 forms a Glycyl lysine isopeptide (Lys-Gly) (interchain with G-Cter in SUMO2); alternate linkage. Phosphoserine occurs at positions 24, 30, 32, and 37. Serine 42 bears the Phosphoserine; by RPS6KA1 mark. Residues 92–128 (EKATMQNLNDRLASYLDKVRALEEANTELELKIRDWY) form a coil 1A region. One can recognise an IF rod domain in the interval 92-403 (EKATMQNLND…RLLEGEDAHL (312 aa)). At threonine 118 the chain carries Phosphothreonine. Residues 129–146 (QKQAPGPAPDYSSYFKTI) form a linker 1 region. The interval 147-238 (EDLRNKIHTA…NHEEEMKALR (92 aa)) is coil 1B. The tract at residues 239–258 (GQVGGEINVEMDAAPGVDLS) is linker 12. Residues 259-400 (RILNEMRDQY…TYRRLLEGED (142 aa)) form a coil 2 region. Residue lysine 286 forms a Glycyl lysine isopeptide (Lys-Gly) (interchain with G-Cter in SUMO2) linkage. Threonine 287 carries the post-translational modification Phosphothreonine. Serine 331 is subject to Phosphoserine. The tract at residues 401–441 (AHLTQYKTKEPVTTRQVRTIVEEVQDGRVISSREQVHQTSH) is tail. Glycyl lysine isopeptide (Lys-Gly) (interchain with G-Cter in SUMO1); alternate cross-links involve residues lysine 407 and lysine 409. Glycyl lysine isopeptide (Lys-Gly) (interchain with G-Cter in SUMO2); alternate cross-links involve residues lysine 407 and lysine 409.

This sequence belongs to the intermediate filament family. Heterodimer of a type I and a type II keratin. KRT17 associates with KRT6 isomers (KRT6A or KRT6B). Interacts with TRADD and SFN. Post-translationally, phosphorylation at Ser-42 occurs in a growth- and stress-dependent fashion in skin keratinocytes, it has no effect on filament organization.

Its subcellular location is the cytoplasm. Functionally, type I keratin involved in the formation and maintenance of various skin appendages, specifically in determining shape and orientation of hair. Required for the correct growth of hair follicles, in particular for the persistence of the anagen (growth) state. Modulates the function of TNF-alpha in the specific context of hair cycling. Regulates protein synthesis and epithelial cell growth through binding to the adapter protein SFN and by stimulating Akt/mTOR pathway. Involved in tissue repair. May be a marker of basal cell differentiation in complex epithelia and therefore indicative of a certain type of epithelial 'stem cells'. Acts as a promoter of epithelial proliferation by acting a regulator of immune response in skin: promotes Th1/Th17-dominated immune environment contributing to the development of basaloid skin tumors. May act as an autoantigen in the immunopathogenesis of psoriasis, with certain peptide regions being a major target for autoreactive T-cells and hence causing their proliferation. This Bos taurus (Bovine) protein is Keratin, type I cytoskeletal 17.